We begin with the raw amino-acid sequence, 95 residues long: Bombyxin C-2 (95 aa).

An N-terminal signal peptide occupies residues 1 to 19; sequence MKLVILLVVVSAMLVLGGA. Gln20 carries the pyrrolidone carboxylic acid modification. Intrachain disulfides connect Cys27–Cys76, Cys39–Cys89, and Cys75–Cys80. Positions 47–67 are cleaved as a propeptide — c peptide like; it reads SGSQYAGYGWPWLPPFSSSRG.

This sequence belongs to the insulin family. Heterodimer of a B chain and an A chain linked by two disulfide bonds.

It localises to the secreted. Its function is as follows. Brain peptide responsible for activation of prothoracic glands to produce ecdysone in insects. In Bombyx mori (Silk moth), this protein is Bombyxin C-2 (BBXC2).